The sequence spans 107 residues: Small polypeptide DEVIL 9 (107 aa).

Residues 1 to 12 (MDEKWRLSKKDA) show a composition bias toward basic and acidic residues. A disordered region spans residues 1 to 79 (MDEKWRLSKK…EKGSITQKYS (79 aa)). The chain crosses the membrane as a helical span at residues 9–29 (KKDALAASCSSSSTSSKSKFS). The span at 13–65 (LAASCSSSSTSSKSKFSRSFSTSASSSKAPAFVRSSSTKCSVPSSSSSSISRS) shows a compositional bias: low complexity. A required for DVL/RTFL small polypeptide activity region spans residues 73–104 (SITQKYSSLAKEQKGRFYIMRRCVAMLVCWHK).

This sequence belongs to the DVL/RTFL small polypeptides family.

The protein localises to the cell membrane. Its function is as follows. Small polypeptide acting as a regulatory molecule which coordinates cellular responses required for differentiation, growth and development, probably by restricting polar cell proliferation in lateral organs and coordinating socket cell recruitment and differentiation at trichome sites. The sequence is that of Small polypeptide DEVIL 9 from Arabidopsis thaliana (Mouse-ear cress).